The following is a 151-amino-acid chain: Ribonuclease H (151 aa).

Residues 1-141 (MKHVDIFTDG…ADELARKGME (141 aa)) form the RNase H type-1 domain. Mg(2+) contacts are provided by aspartate 9, glutamate 47, aspartate 69, and aspartate 133.

This sequence belongs to the RNase H family. As to quaternary structure, monomer. The cofactor is Mg(2+).

The protein resides in the cytoplasm. The catalysed reaction is Endonucleolytic cleavage to 5'-phosphomonoester.. Functionally, endonuclease that specifically degrades the RNA of RNA-DNA hybrids. This Rhizobium johnstonii (strain DSM 114642 / LMG 32736 / 3841) (Rhizobium leguminosarum bv. viciae) protein is Ribonuclease H.